Consider the following 140-residue polypeptide: Cytochrome B5 isoform D (140 aa).

The region spanning 5–81 (GKVFTLSEVS…LDEYYVGDID (77 aa)) is the Cytochrome b5 heme-binding domain. Heme-binding residues include His-40 and His-64. A helical membrane pass occupies residues 109 to 129 (FVIKLLQFLVPLLILGLAFGI).

It belongs to the cytochrome b5 family. In terms of assembly, interacts with CER1, BI-1, FAH1 and FAH2. As to expression, expressed in roots, stems, leaves, flowers and siliques.

The protein localises to the endoplasmic reticulum membrane. Functionally, membrane bound hemoprotein which function as an electron carrier for several membrane bound oxygenases, including fatty acid desaturases. This is Cytochrome B5 isoform D from Arabidopsis thaliana (Mouse-ear cress).